Consider the following 486-residue polypeptide: ATP synthase subunit beta (486 aa).

164–171 (GGAGVGKT) serves as a coordination point for ATP.

The protein belongs to the ATPase alpha/beta chains family. In terms of assembly, F-type ATPases have 2 components, CF(1) - the catalytic core - and CF(0) - the membrane proton channel. CF(1) has five subunits: alpha(3), beta(3), gamma(1), delta(1), epsilon(1). CF(0) has four main subunits: a(1), b(1), b'(1) and c(9-12).

It is found in the cellular thylakoid membrane. The catalysed reaction is ATP + H2O + 4 H(+)(in) = ADP + phosphate + 5 H(+)(out). Produces ATP from ADP in the presence of a proton gradient across the membrane. The catalytic sites are hosted primarily by the beta subunits. The polypeptide is ATP synthase subunit beta (Prochlorococcus marinus (strain MIT 9301)).